The following is a 725-amino-acid chain: Malate synthase G 2 (725 aa).

Residues Val-118, 125–126, Ser-276, and Arg-313 contribute to the acetyl-CoA site; that span reads RY. Arg-340 acts as the Proton acceptor in catalysis. Residues Arg-340, Glu-429, and 454–457 each bind glyoxylate; that span reads GFLD. Glu-429 and Asp-457 together coordinate Mg(2+). Pro-538 contacts acetyl-CoA. The residue at position 619 (Cys-619) is a Cysteine sulfenic acid (-SOH). The Proton donor role is filled by Asp-633.

It belongs to the malate synthase family. GlcB subfamily. As to quaternary structure, monomer. It depends on Mg(2+) as a cofactor.

It localises to the cytoplasm. The catalysed reaction is glyoxylate + acetyl-CoA + H2O = (S)-malate + CoA + H(+). Its pathway is carbohydrate metabolism; glyoxylate cycle; (S)-malate from isocitrate: step 2/2. Its function is as follows. Involved in the glycolate utilization. Catalyzes the condensation and subsequent hydrolysis of acetyl-coenzyme A (acetyl-CoA) and glyoxylate to form malate and CoA. The chain is Malate synthase G 2 from Pseudomonas syringae pv. tomato (strain ATCC BAA-871 / DC3000).